We begin with the raw amino-acid sequence, 130 residues long: Leptin receptor gene-related protein (130 aa).

4 helical membrane-spanning segments follow: residues 7–27, 32–52, 68–88, and 99–119; these read LVAL…GCAL, QYWP…NLIA, LAYF…VVLA, and GLVM…FLIF.

Belongs to the OB-RGRP/VPS55 family.

It localises to the golgi apparatus membrane. It is found in the endosome membrane. Involved in protein trafficking. May be involved in the down-regulation of membrane protein levels. The protein is Leptin receptor gene-related protein (leprot) of Danio rerio (Zebrafish).